Reading from the N-terminus, the 444-residue chain is Acyl-CoA 6-desaturase (444 aa).

The Cytoplasmic segment spans residues 1–131 (MGKGGNQGEG…DMNLFKTNHV (131 aa)). Positions 18-95 (VPTFSWEEIQ…LKPLLIGELA (78 aa)) constitute a Cytochrome b5 heme-binding domain. A helical transmembrane segment spans residues 132–152 (FFLLLLAHIIALESIAWFTVF). Over 153 to 157 (YFGNG) the chain is Lumenal. A helical membrane pass occupies residues 158 to 178 (WIPTLITAFVLATSQAQAGWL). At 179–264 (QHDYGHLSVY…KYLPYNHQHE (86 aa)) the chain is on the cytoplasmic side. The Histidine box-1 motif lies at 180–184 (HDYGH). The Histidine box-2 signature appears at 217 to 221 (HFQHH). Residues 265-285 (YFFLIGPPLLIPMYFQYQIIM) form a helical membrane-spanning segment. The Lumenal segment spans residues 286–305 (TMIVHKNWVDLAWAVSYYIR). Residues 306 to 326 (FFITYIPFYGILGALLFLNFI) traverse the membrane as a helical segment. The Cytoplasmic segment spans residues 327–444 (RFLESHWFVW…KLWLDAYLHK (118 aa)). A Histidine box-3 motif is present at residues 382–386 (QIEHH).

Belongs to the fatty acid desaturase type 1 family. Expressed in a wide array of tissues, highest expression is found in liver followed by brain, lung, heart, and retina. A lower level is found in breast tumor when compared with normal tissues; lowest levels were found in patients with poor prognostic index.

The protein localises to the endoplasmic reticulum membrane. The enzyme catalyses (9Z,12Z)-octadecadienoyl-CoA + 2 Fe(II)-[cytochrome b5] + O2 + 2 H(+) = (6Z,9Z,12Z)-octadecatrienoyl-CoA + 2 Fe(III)-[cytochrome b5] + 2 H2O. The catalysed reaction is (9Z,12Z,15Z)-octadecatrienoyl-CoA + 2 Fe(II)-[cytochrome b5] + O2 + 2 H(+) = (6Z,9Z,12Z,15Z)-octadecatetraenoyl-CoA + 2 Fe(III)-[cytochrome b5] + 2 H2O. It carries out the reaction hexadecanoyl-CoA + 2 Fe(II)-[cytochrome b5] + O2 + 2 H(+) = (6Z)-hexadecenoyl-CoA + 2 Fe(III)-[cytochrome b5] + 2 H2O. It catalyses the reaction (9Z,12Z,15Z,18Z,21Z)-tetracosapentaenoyl-CoA + 2 Fe(II)-[cytochrome b5] + O2 + 2 H(+) = (6Z,9Z,12Z,15Z,18Z,21Z)-tetracosahexaenoyl-CoA + 2 Fe(III)-[cytochrome b5] + 2 H2O. The enzyme catalyses (11E)-octadecenoyl-CoA + 2 Fe(II)-[cytochrome b5] + O2 + 2 H(+) = (6Z,11E)-octadecadienoyl-CoA + 2 Fe(III)-[cytochrome b5] + 2 H2O. The catalysed reaction is (11Z,14Z)-eicosadienoyl-CoA + 2 Fe(II)-[cytochrome b5] + O2 + 2 H(+) = (8Z,11Z,14Z)-eicosatrienoyl-CoA + 2 Fe(III)-[cytochrome b5] + 2 H2O. It carries out the reaction (11Z,14Z,17Z)-eicosatrienoyl-CoA + 2 Fe(II)-[cytochrome b5] + O2 + 2 H(+) = (8Z,11Z,14Z,17Z)-eicosatetraenoyl-CoA + 2 Fe(III)-[cytochrome b5] + 2 H2O. The protein operates within lipid metabolism; polyunsaturated fatty acid biosynthesis. Functionally, involved in the biosynthesis of highly unsaturated fatty acids (HUFA) from the essential polyunsaturated fatty acids (PUFA) linoleic acid (LA) (18:2n-6) and alpha-linolenic acid (ALA) (18:3n-3) precursors, acting as a fatty acyl-coenzyme A (CoA) desaturase that introduces a cis double bond at carbon 6 of the fatty acyl chain. Catalyzes the first and rate limiting step in this pathway which is the desaturation of LA (18:2n-6) and ALA (18:3n-3) into gamma-linoleate (GLA) (18:3n-6) and stearidonate (18:4n-3), respectively. Subsequently, in the biosynthetic pathway of HUFA n-3 series, it desaturates tetracosapentaenoate (24:5n-3) to tetracosahexaenoate (24:6n-3), which is then converted to docosahexaenoate (DHA)(22:6n-3), an important lipid for nervous system function. Desaturates hexadecanate (palmitate) to produce 6Z-hexadecenoate (sapienate), a fatty acid unique to humans and major component of human sebum, that has been implicated in the development of acne and may have potent antibacterial activity. It can also desaturate (11E)-octadecenoate (trans-vaccenoate, the predominant trans fatty acid in human milk) at carbon 6 generating (6Z,11E)-octadecadienoate. In addition to Delta-6 activity, this enzyme exhibits Delta-8 activity with slight biases toward n-3 fatty acyl-CoA substrates. The chain is Acyl-CoA 6-desaturase from Homo sapiens (Human).